We begin with the raw amino-acid sequence, 309 residues long: Prepilin leader peptidase/N-methyltransferase (309 aa).

The chain crosses the membrane as a helical span at residues 35–55 (MQLAFAIVLGLVVGSFINVVV). Residues Cys-96, Cys-99, Cys-121, and Cys-124 each coordinate Zn(2+). 6 consecutive transmembrane segments (helical) span residues 147–167 (LALFGPSGAALAAFGLCAALL), 183–203 (LTLPLLWAGLCVNLWGTFASL), 207–227 (VIGAIAGYLFLWCILWLFKLL), 230–250 (IEGIGYGDLKLLAALGAWLGW), 253–273 (LPQVVLIAAVAGAAVGLVATW), and 288–308 (FLAAGGAATLFFGTPFYLLLG).

The protein belongs to the peptidase A24 family. It depends on Zn(2+) as a cofactor.

Its subcellular location is the cell inner membrane. It catalyses the reaction Typically cleaves a -Gly-|-Phe- bond to release an N-terminal, basic peptide of 5-8 residues from type IV prepilin, and then N-methylates the new N-terminal amino group, the methyl donor being S-adenosyl-L-methionine.. Plays an essential role in type IV pili and type II pseudopili formation by proteolytically removing the leader sequence from substrate proteins and subsequently monomethylating the alpha-amino group of the newly exposed N-terminal phenylalanine. This Burkholderia pseudomallei (strain K96243) protein is Prepilin leader peptidase/N-methyltransferase (gspO).